The sequence spans 228 residues: MAWNGRFGEDGEEERSLELSLALPGYFSSSGLQGNTSTAADGAKGNDGFKASRPAAPVVGWPPVRSFRRNLASSSSSSKPPRGGRDAAAAATGGKVARFVKVNMDGVPIGRKVDLAAHGGYGELSAAVDRLFRGLLAAQRDPTMATAAAAAAAGESCTGEEEAIAGLLDGGSGEYTLVYEDDEGDQMLVGDVPWNMFIAAARRLRVLRSSDLNASTIRAGSRKRAAAE.

An EAR-like (transcriptional repression) motif is present at residues 19 to 23; it reads LSLAL. The span at 28–39 shows a compositional bias: polar residues; sequence SSSGLQGNTSTA. Disordered regions lie at residues 28–57 and 70–90; these read SSSGLQGNTSTAADGAKGNDGFKASRPAAP and NLASSSSSSKPPRGGRDAAAA. In terms of domain architecture, PB1 spans 97–214; it reads ARFVKVNMDG…RVLRSSDLNA (118 aa).

It belongs to the Aux/IAA family. As to quaternary structure, homodimers and heterodimers. As to expression, expressed in roots, flowers and seedlings.

The protein resides in the nucleus. In terms of biological role, aux/IAA proteins are short-lived transcriptional factors that function as repressors of early auxin response genes at low auxin concentrations. The polypeptide is Auxin-responsive protein IAA16 (IAA16) (Oryza sativa subsp. japonica (Rice)).